Consider the following 59-residue polypeptide: Large ribosomal subunit protein bL32 (59 aa).

Belongs to the bacterial ribosomal protein bL32 family.

In Anaeromyxobacter dehalogenans (strain 2CP-C), this protein is Large ribosomal subunit protein bL32.